A 559-amino-acid polypeptide reads, in one-letter code: Hepatocyte nuclear factor 1-beta (559 aa).

The dimerization stretch occupies residues 1–31 (MVSKLTSLQQELLSALLSSGVTKEVLVQALE). In terms of domain architecture, HNF-p1 spans 1–32 (MVSKLTSLQQELLSALLSSGVTKEVLVQALEE). Residues Ser-49, Ser-52, Ser-75, and Ser-80 each carry the phosphoserine modification. The 96-residue stretch at 93-188 (KELQALNTEE…ILRQFNQTVQ (96 aa)) folds into the POU-specific atypical domain. A DNA-binding region (homeobox; HNF1-type) is located at residues 231 to 312 (MRRNRFKWGP…RRKEEEAFRQ (82 aa)). Positions 328-341 (NTLLSHSSPHHQPS) are enriched in low complexity. The disordered stretch occupies residues 328 to 371 (NTLLSHSSPHHQPSTSPPNKLPGVRYNQQGNNEVTSSSTISHHG). Polar residues predominate over residues 353 to 371 (YNQQGNNEVTSSSTISHHG).

The protein belongs to the HNF1 homeobox family. Binds DNA as a dimer. Can form homodimer or heterodimer with HNF1-alpha. Interacts (via HNF-p1 domain) with PCBD1; the interaction increases its transactivation activity.

The protein resides in the nucleus. Transcription factor that binds to the inverted palindrome 5'-GTTAATNATTAAC-3'. Binds to the FPC element in the cAMP regulatory unit of the PLAU gene. Transcriptional activity is increased by coactivator PCBD1. The chain is Hepatocyte nuclear factor 1-beta (HNF1B) from Sus scrofa (Pig).